Here is a 448-residue protein sequence, read N- to C-terminus: Phosphoglucosamine mutase (448 aa).

The Phosphoserine intermediate role is filled by serine 102. Positions 102, 241, 243, and 245 each coordinate Mg(2+). Position 102 is a phosphoserine (serine 102).

It belongs to the phosphohexose mutase family. Mg(2+) is required as a cofactor. In terms of processing, activated by phosphorylation.

It carries out the reaction alpha-D-glucosamine 1-phosphate = D-glucosamine 6-phosphate. Functionally, catalyzes the conversion of glucosamine-6-phosphate to glucosamine-1-phosphate. The chain is Phosphoglucosamine mutase from Ruegeria pomeroyi (strain ATCC 700808 / DSM 15171 / DSS-3) (Silicibacter pomeroyi).